The sequence spans 475 residues: Ribulose bisphosphate carboxylase large chain (475 aa).

A propeptide spanning residues 1–2 (MS) is cleaved from the precursor. At Pro-3 the chain carries N-acetylproline. Lys-14 bears the N6,N6,N6-trimethyllysine mark. Residues Asn-123 and Thr-173 each coordinate substrate. Catalysis depends on Lys-175, which acts as the Proton acceptor. Lys-177 is a binding site for substrate. Residues Lys-201, Asp-203, and Glu-204 each contribute to the Mg(2+) site. The residue at position 201 (Lys-201) is an N6-carboxylysine. His-294 functions as the Proton acceptor in the catalytic mechanism. Arg-295, His-327, and Ser-379 together coordinate substrate.

It belongs to the RuBisCO large chain family. Type I subfamily. Heterohexadecamer of 8 large chains and 8 small chains; disulfide-linked. The disulfide link is formed within the large subunit homodimers. Mg(2+) is required as a cofactor. The disulfide bond which can form in the large chain dimeric partners within the hexadecamer appears to be associated with oxidative stress and protein turnover.

It is found in the plastid. Its subcellular location is the chloroplast. The catalysed reaction is 2 (2R)-3-phosphoglycerate + 2 H(+) = D-ribulose 1,5-bisphosphate + CO2 + H2O. It carries out the reaction D-ribulose 1,5-bisphosphate + O2 = 2-phosphoglycolate + (2R)-3-phosphoglycerate + 2 H(+). Its function is as follows. RuBisCO catalyzes two reactions: the carboxylation of D-ribulose 1,5-bisphosphate, the primary event in carbon dioxide fixation, as well as the oxidative fragmentation of the pentose substrate in the photorespiration process. Both reactions occur simultaneously and in competition at the same active site. The sequence is that of Ribulose bisphosphate carboxylase large chain from Gossypium hirsutum (Upland cotton).